We begin with the raw amino-acid sequence, 135 residues long: MLLKSLFLLFLTAIAFASELQIGILTSVPDDKCKVKSKPGDLISVHYEGKLEDGTVFDSSYSRGQPISFQLGIGQVIQGWDQGLTRMCIGEKRKLTIPSHLAYGDRGVGPIPAKATLVFVAELVDIAGSSKHDEL.

Residues 1–17 form the signal peptide; that stretch reads MLLKSLFLLFLTAIAFA. In terms of domain architecture, PPIase FKBP-type spans 40-127; the sequence is GDLISVHYEG…VFVAELVDIA (88 aa). Positions 132 to 135 match the Prevents secretion from ER motif; it reads HDEL.

It belongs to the FKBP-type PPIase family. FKBP2 subfamily.

The protein resides in the endoplasmic reticulum. The catalysed reaction is [protein]-peptidylproline (omega=180) = [protein]-peptidylproline (omega=0). Its activity is regulated as follows. Inhibited by both FK506 and rapamycin. In terms of biological role, PPIases accelerate the folding of proteins. It catalyzes the cis-trans isomerization of proline imidic peptide bonds in oligopeptides. The polypeptide is FK506-binding protein 2 (FPR2) (Debaryomyces hansenii (strain ATCC 36239 / CBS 767 / BCRC 21394 / JCM 1990 / NBRC 0083 / IGC 2968) (Yeast)).